The following is a 154-amino-acid chain: D-aminoacyl-tRNA deacylase (154 aa).

The Gly-cisPro motif, important for rejection of L-amino acids motif lies at 142 to 143 (GP).

It belongs to the DTD family. As to quaternary structure, homodimer.

The protein localises to the cytoplasm. The catalysed reaction is glycyl-tRNA(Ala) + H2O = tRNA(Ala) + glycine + H(+). The enzyme catalyses a D-aminoacyl-tRNA + H2O = a tRNA + a D-alpha-amino acid + H(+). Functionally, an aminoacyl-tRNA editing enzyme that deacylates mischarged D-aminoacyl-tRNAs. Also deacylates mischarged glycyl-tRNA(Ala), protecting cells against glycine mischarging by AlaRS. Acts via tRNA-based rather than protein-based catalysis; rejects L-amino acids rather than detecting D-amino acids in the active site. By recycling D-aminoacyl-tRNA to D-amino acids and free tRNA molecules, this enzyme counteracts the toxicity associated with the formation of D-aminoacyl-tRNA entities in vivo and helps enforce protein L-homochirality. This Polaromonas naphthalenivorans (strain CJ2) protein is D-aminoacyl-tRNA deacylase.